The chain runs to 196 residues: Hypoxanthine/guanine phosphoribosyltransferase (196 aa).

The protein belongs to the purine/pyrimidine phosphoribosyltransferase family. Archaeal HPRT subfamily. Homodimer.

The protein resides in the cytoplasm. The catalysed reaction is IMP + diphosphate = hypoxanthine + 5-phospho-alpha-D-ribose 1-diphosphate. The enzyme catalyses GMP + diphosphate = guanine + 5-phospho-alpha-D-ribose 1-diphosphate. Its pathway is purine metabolism; IMP biosynthesis via salvage pathway; IMP from hypoxanthine: step 1/1. Functionally, catalyzes a salvage reaction resulting in the formation of IMP that is energically less costly than de novo synthesis. The chain is Hypoxanthine/guanine phosphoribosyltransferase from Methanocaldococcus sp. (strain FS406-22).